A 525-amino-acid polypeptide reads, in one-letter code: Calcium uptake protein 1 homolog, mitochondrial (525 aa).

The segment at Ala-109–Leu-146 is disordered. Positions Ser-130 to Gly-141 are enriched in acidic residues. EF-hand domains follow at residues Ile-268–Gln-303 and Leu-459–Arg-494. 10 residues coordinate Ca(2+): Asp-281, Asn-283, Asp-285, Asp-287, Glu-292, Asp-472, Asn-474, Asp-476, Gln-478, and Glu-483.

The protein belongs to the MICU1 family. MICU1 subfamily.

It localises to the mitochondrion intermembrane space. It is found in the mitochondrion inner membrane. Its function is as follows. Calcium sensor of the mitochondrial calcium uniporter (MCU) channel, which senses calcium level via its EF-hand domains. At low calcium levels, MICU1 occludes the pore of the MCU channel, preventing mitochondrial calcium uptake. At higher calcium levels, calcium-binding to MICU1 induces a conformational change that weakens MCU-MICU1 interactions and moves MICU1 away from the pore, allowing calcium permeation through the MCU channel. Also required to protect against manganese toxicity by preventing manganese uptake by MCU. During development, required in alpha/beta or gamma mushroom body neurons to support olfactory intermediate-term memory in the adult. This is Calcium uptake protein 1 homolog, mitochondrial from Drosophila melanogaster (Fruit fly).